Reading from the N-terminus, the 307-residue chain is Ribonuclease Z (307 aa).

Residues H61, H63, D65, H66, H138, D207, and H265 each coordinate Zn(2+). The active-site Proton acceptor is D65.

Belongs to the RNase Z family. Homodimer. The cofactor is Zn(2+).

The catalysed reaction is Endonucleolytic cleavage of RNA, removing extra 3' nucleotides from tRNA precursor, generating 3' termini of tRNAs. A 3'-hydroxy group is left at the tRNA terminus and a 5'-phosphoryl group is left at the trailer molecule.. Its function is as follows. Zinc phosphodiesterase, which displays some tRNA 3'-processing endonuclease activity. Probably involved in tRNA maturation, by removing a 3'-trailer from precursor tRNA. This chain is Ribonuclease Z, found in Methanothermobacter thermautotrophicus (strain ATCC 29096 / DSM 1053 / JCM 10044 / NBRC 100330 / Delta H) (Methanobacterium thermoautotrophicum).